The following is a 178-amino-acid chain: Putative metal-dependent hydrolase GTNG_0529 (178 aa).

Zn(2+) contacts are provided by H68, H161, and H165.

The protein belongs to the metal hydrolase YfiT family. Homodimer. Zn(2+) serves as cofactor.

It localises to the cytoplasm. Possible metal-dependent hydrolase. This Geobacillus thermodenitrificans (strain NG80-2) protein is Putative metal-dependent hydrolase GTNG_0529.